The primary structure comprises 669 residues: DNA ligase (669 aa).

NAD(+) is bound by residues 34–38 (DAEYD), 83–84 (SL), and Glu-114. The active-site N6-AMP-lysine intermediate is the Lys-116. The NAD(+) site is built by Arg-137, Glu-171, Lys-287, and Lys-311. Zn(2+) contacts are provided by Cys-405, Cys-408, Cys-423, and Cys-428. A BRCT domain is found at 591–669 (NVESYFAGKT…EERFLQELNK (79 aa)).

Belongs to the NAD-dependent DNA ligase family. LigA subfamily. The cofactor is Mg(2+). Mn(2+) is required as a cofactor.

The catalysed reaction is NAD(+) + (deoxyribonucleotide)n-3'-hydroxyl + 5'-phospho-(deoxyribonucleotide)m = (deoxyribonucleotide)n+m + AMP + beta-nicotinamide D-nucleotide.. In terms of biological role, DNA ligase that catalyzes the formation of phosphodiester linkages between 5'-phosphoryl and 3'-hydroxyl groups in double-stranded DNA using NAD as a coenzyme and as the energy source for the reaction. It is essential for DNA replication and repair of damaged DNA. In Bacillus cereus (strain ATCC 10987 / NRS 248), this protein is DNA ligase.